Consider the following 382-residue polypeptide: Galactokinase (382 aa).

E34–D37 contacts substrate. G124 to S130 is a binding site for ATP. Residues S130 and E162 each coordinate Mg(2+). D174 functions as the Proton acceptor in the catalytic mechanism. Y223 contributes to the substrate binding site.

Belongs to the GHMP kinase family. GalK subfamily.

It is found in the cytoplasm. It carries out the reaction alpha-D-galactose + ATP = alpha-D-galactose 1-phosphate + ADP + H(+). It functions in the pathway carbohydrate metabolism; galactose metabolism. Functionally, catalyzes the transfer of the gamma-phosphate of ATP to D-galactose to form alpha-D-galactose-1-phosphate (Gal-1-P). The polypeptide is Galactokinase (Escherichia coli O1:K1 / APEC).